A 485-amino-acid chain; its full sequence is NADH-quinone oxidoreductase subunit N (485 aa).

14 helical membrane passes run Leu8–Ile28, Phe35–Val55, Gly78–Tyr98, Glu104–His124, Leu125–Tyr145, Tyr159–Ala179, Val203–Phe223, Pro235–Met255, Met271–Gln291, Leu297–Gln317, Gly327–Met347, Ala374–Gly394, Trp408–Arg427, and Ala449–Val469.

This sequence belongs to the complex I subunit 2 family. NDH-1 is composed of 13 different subunits. Subunits NuoA, H, J, K, L, M, N constitute the membrane sector of the complex.

The protein resides in the cell inner membrane. It catalyses the reaction a quinone + NADH + 5 H(+)(in) = a quinol + NAD(+) + 4 H(+)(out). Its function is as follows. NDH-1 shuttles electrons from NADH, via FMN and iron-sulfur (Fe-S) centers, to quinones in the respiratory chain. The immediate electron acceptor for the enzyme in this species is believed to be ubiquinone. Couples the redox reaction to proton translocation (for every two electrons transferred, four hydrogen ions are translocated across the cytoplasmic membrane), and thus conserves the redox energy in a proton gradient. This Serratia proteamaculans (strain 568) protein is NADH-quinone oxidoreductase subunit N.